A 196-amino-acid chain; its full sequence is MAASVFCCLRWCRDGGAGHIPLKEMPAVQLDTQRMGTDVVIVKNGRRICGTGGCLANAPLHQNKSYFEFKIQSTGIWGIGVATQKANLNQIPLGRDVHSLVMRNDGALYYNNEEKNRLPANSLPQEGDVVGITYDHVELNVYLNGKNMHCPASGIRGTVYPVVYVDDSAILDCQFSEFYHTPPPGFEKILFEQQIF.

The B30.2/SPRY domain maps to 1 to 184 (MAASVFCCLR…FSEFYHTPPP (184 aa)).

In Gallus gallus (Chicken), this protein is SPRY domain-containing protein 7 (SPRYD7).